Here is a 350-residue protein sequence, read N- to C-terminus: Small ribosomal subunit biogenesis GTPase RsgA (350 aa).

Positions 1-17 are enriched in polar residues; it reads MSKNKLSKGQQRRVNAN. Residues 1–33 form a disordered region; the sequence is MSKNKLSKGQQRRVNANHQRRLKTSKEKPDYDD. In terms of domain architecture, CP-type G spans 104–273; the sequence is TSVLTRPDFY…VIDSPGVREF (170 aa). Residues 160–163 and 214–222 each bind GTP; these read NKID and GQSGVGKSS. C297, C302, H304, and C310 together coordinate Zn(2+).

It belongs to the TRAFAC class YlqF/YawG GTPase family. RsgA subfamily. As to quaternary structure, monomer. Associates with 30S ribosomal subunit, binds 16S rRNA. The cofactor is Zn(2+).

It localises to the cytoplasm. One of several proteins that assist in the late maturation steps of the functional core of the 30S ribosomal subunit. Helps release RbfA from mature subunits. May play a role in the assembly of ribosomal proteins into the subunit. Circularly permuted GTPase that catalyzes slow GTP hydrolysis, GTPase activity is stimulated by the 30S ribosomal subunit. The protein is Small ribosomal subunit biogenesis GTPase RsgA of Shigella flexneri.